The chain runs to 148 residues: Ribosome-binding factor A (148 aa).

The tract at residues 120 to 148 (AKAREGASYAGDADPYRTAEPDADDAPRA) is disordered. Residues 133–148 (DPYRTAEPDADDAPRA) show a composition bias toward basic and acidic residues.

It belongs to the RbfA family. As to quaternary structure, monomer. Binds 30S ribosomal subunits, but not 50S ribosomal subunits or 70S ribosomes.

The protein resides in the cytoplasm. Functionally, one of several proteins that assist in the late maturation steps of the functional core of the 30S ribosomal subunit. Associates with free 30S ribosomal subunits (but not with 30S subunits that are part of 70S ribosomes or polysomes). Required for efficient processing of 16S rRNA. May interact with the 5'-terminal helix region of 16S rRNA. The protein is Ribosome-binding factor A of Micrococcus luteus (strain ATCC 4698 / DSM 20030 / JCM 1464 / CCM 169 / CCUG 5858 / IAM 1056 / NBRC 3333 / NCIMB 9278 / NCTC 2665 / VKM Ac-2230) (Micrococcus lysodeikticus).